The following is a 114-amino-acid chain: Large ribosomal subunit protein uL18 (114 aa).

The protein belongs to the universal ribosomal protein uL18 family. Part of the 50S ribosomal subunit; part of the 5S rRNA/L5/L18/L25 subcomplex. Contacts the 5S and 23S rRNAs.

Functionally, this is one of the proteins that bind and probably mediate the attachment of the 5S RNA into the large ribosomal subunit, where it forms part of the central protuberance. The protein is Large ribosomal subunit protein uL18 of Porphyromonas gingivalis (strain ATCC 33277 / DSM 20709 / CIP 103683 / JCM 12257 / NCTC 11834 / 2561).